Reading from the N-terminus, the 350-residue chain is uncharacterized protein (350 aa).

Positions 214, 225, 289, 318, and 332 each coordinate Mn(2+).

Belongs to the peptidase M24B family. It depends on Mn(2+) as a cofactor.

This is an uncharacterized protein from Staphylococcus saprophyticus subsp. saprophyticus (strain ATCC 15305 / DSM 20229 / NCIMB 8711 / NCTC 7292 / S-41).